Reading from the N-terminus, the 1997-residue chain is Nucleoprotein TPR (1997 aa).

Coiled-coil stretches lie at residues 1 to 36 (QEQH…NDLL), 101 to 277 (EIVK…HQMT), 335 to 1103 (DSTE…IKTI), and 1129 to 1305 (AEAS…EPQE). Basic and acidic residues-rich tracts occupy residues 672 to 702 (SSEY…KTVE) and 1290 to 1305 (REQQ…EPQE). Disordered regions lie at residues 672–706 (SSEY…QMEQ), 1290–1352 (REQQ…AAVP), 1438–1529 (AFVQ…KTET), 1561–1752 (IQTS…RRQS), 1795–1832 (AIHS…ASQG), and 1870–1997 (ENPA…RSNI). Composition is skewed to polar residues over residues 1306 to 1321 (TTRI…QPTT), 1328 to 1347 (SANT…SKVT), and 1446 to 1487 (SHAT…SSSI). The span at 1511 to 1529 (DQQRTKKRKEEDIEEKTET) shows a compositional bias: basic and acidic residues. A compositionally biased stretch (polar residues) spans 1561-1587 (IQTSQVIESQAPEQLQNVQSTQDSLQD). Composition is skewed to acidic residues over residues 1601-1637 (SDEE…DSNE) and 1644-1667 (GNED…ETED). 3 stretches are compositionally biased toward polar residues: residues 1692 to 1709 (AEST…SASD), 1817 to 1830 (QASS…QLAS), and 1879 to 1899 (HASQ…TSVD). Over residues 1902–1915 (AADEGDEVFVEAES) the composition is skewed to acidic residues. A compositionally biased stretch (low complexity) spans 1950 to 1959 (SSSIADTSSS).

Belongs to the TPR family. As to quaternary structure, homodimer. Part of the nuclear pore complex (NPC). Interacts with nuclear receptor KPNB1; the interaction occurs in a RanGTP-dependent manner. Associates with the Importin alpha/Importin beta receptor. Expressed in epithelial cells, oocytes and egg (at protein level).

It is found in the nucleus. It localises to the nucleus membrane. Its subcellular location is the nucleus envelope. The protein localises to the nuclear pore complex. The protein resides in the cytoplasm. It is found in the cytoskeleton. It localises to the spindle. Its subcellular location is the chromosome. The protein localises to the centromere. The protein resides in the kinetochore. Its function is as follows. Component of the nuclear pore complex (NPC), a complex required for the trafficking across the nuclear envelope. Functions as a scaffolding element in the nuclear phase of the NPC essential for normal nucleocytoplasmic transport of proteins and mRNAs, plays a role in the establishment of nuclear-peripheral chromatin compartmentalization in interphase, and in the mitotic spindle checkpoint signaling during mitosis. Involved in the quality control and retention of unspliced mRNAs in the nucleus. Implicated in nuclear export of mRNAs transcribed from heat shock gene promoters. May play a limited role in the regulation of nuclear protein export. May be involved in the formation and/or maintenance of NPC-associated perinuclear heterochromatin exclusion zones (HEZs). Finally, may act as a spatial regulator of the spindle-assembly checkpoint (SAC) response. This Xenopus laevis (African clawed frog) protein is Nucleoprotein TPR.